A 72-amino-acid chain; its full sequence is Large ribosomal subunit protein uL29 (72 aa).

The protein belongs to the universal ribosomal protein uL29 family.

This is Large ribosomal subunit protein uL29 from Thermus thermophilus (strain ATCC BAA-163 / DSM 7039 / HB27).